Consider the following 212-residue polypeptide: Molybdenum cofactor guanylyltransferase (212 aa).

GTP contacts are provided by residues leucine 14–glycine 16, lysine 27, asparagine 55, aspartate 73, and aspartate 108. Residue aspartate 108 coordinates Mg(2+).

The protein belongs to the MobA family. In terms of assembly, monomer. Mg(2+) is required as a cofactor.

It localises to the cytoplasm. It carries out the reaction Mo-molybdopterin + GTP + H(+) = Mo-molybdopterin guanine dinucleotide + diphosphate. In terms of biological role, transfers a GMP moiety from GTP to Mo-molybdopterin (Mo-MPT) cofactor (Moco or molybdenum cofactor) to form Mo-molybdopterin guanine dinucleotide (Mo-MGD) cofactor. This chain is Molybdenum cofactor guanylyltransferase, found in Bradyrhizobium sp. (strain ORS 278).